The chain runs to 429 residues: Adenylosuccinate synthetase (429 aa).

GTP contacts are provided by residues 12 to 18 (GDEGKGK) and 40 to 42 (GHT). The active-site Proton acceptor is the Asp-13. Asp-13 and Gly-40 together coordinate Mg(2+). Residues 13-16 (DEGK), 38-41 (NAGH), Thr-128, Arg-142, Gln-223, Thr-238, and Arg-302 contribute to the IMP site. The active-site Proton donor is His-41. 298 to 304 (VNTGRKR) serves as a coordination point for substrate. GTP is bound by residues Arg-304, 330-332 (KLD), and 412-414 (GVG).

Belongs to the adenylosuccinate synthetase family. Homodimer. It depends on Mg(2+) as a cofactor.

It is found in the cytoplasm. It carries out the reaction IMP + L-aspartate + GTP = N(6)-(1,2-dicarboxyethyl)-AMP + GDP + phosphate + 2 H(+). Its pathway is purine metabolism; AMP biosynthesis via de novo pathway; AMP from IMP: step 1/2. Functionally, plays an important role in the de novo pathway of purine nucleotide biosynthesis. Catalyzes the first committed step in the biosynthesis of AMP from IMP. The polypeptide is Adenylosuccinate synthetase (Corynebacterium jeikeium (strain K411)).